Consider the following 460-residue polypeptide: Argininosuccinate lyase (460 aa).

The protein belongs to the lyase 1 family. Argininosuccinate lyase subfamily.

The protein localises to the cytoplasm. It catalyses the reaction 2-(N(omega)-L-arginino)succinate = fumarate + L-arginine. It participates in amino-acid biosynthesis; L-arginine biosynthesis; L-arginine from L-ornithine and carbamoyl phosphate: step 3/3. The protein is Argininosuccinate lyase of Alkaliphilus metalliredigens (strain QYMF).